The primary structure comprises 255 residues: Small ribosomal subunit protein uS2 (255 aa).

A disordered region spans residues 230 to 255; it reads QSSSGRDLGASSEVPVEPALEEAAEG.

This sequence belongs to the universal ribosomal protein uS2 family.

The protein is Small ribosomal subunit protein uS2 of Rhizobium etli (strain CIAT 652).